A 162-amino-acid chain; its full sequence is Allophycocyanin subunit beta (162 aa).

An N4-methylasparagine modification is found at asparagine 72. Cysteine 82 is a binding site for (2R,3E)-phycocyanobilin.

This sequence belongs to the phycobiliprotein family. As to quaternary structure, heterohexamer of two alpha chains, one alpha-B chain and three beta chains. Contains one covalently linked phycocyanobilin chromophore. The chromophore is added by phycocyanobilin lyase CpcS 1.

The protein localises to the cellular thylakoid membrane. Light-harvesting photosynthetic bile pigment-protein from the phycobiliprotein complex. Allophycocyanin has a maximum absorption at approximately 650 to 653 nanometers. This is Allophycocyanin subunit beta (apcB) from Nostoc sp. (strain PCC 7120 / SAG 25.82 / UTEX 2576).